Here is a 321-residue protein sequence, read N- to C-terminus: tRNA U34 carboxymethyltransferase (321 aa).

Carboxy-S-adenosyl-L-methionine is bound by residues Lys-90, Trp-104, Lys-109, Gly-129, 151–153, 180–181, Met-195, Tyr-199, and Arg-314; these read DPT and IE.

Belongs to the class I-like SAM-binding methyltransferase superfamily. CmoB family. In terms of assembly, homotetramer.

It carries out the reaction carboxy-S-adenosyl-L-methionine + 5-hydroxyuridine(34) in tRNA = 5-carboxymethoxyuridine(34) in tRNA + S-adenosyl-L-homocysteine + H(+). Its function is as follows. Catalyzes carboxymethyl transfer from carboxy-S-adenosyl-L-methionine (Cx-SAM) to 5-hydroxyuridine (ho5U) to form 5-carboxymethoxyuridine (cmo5U) at position 34 in tRNAs. This chain is tRNA U34 carboxymethyltransferase, found in Pasteurella multocida (strain Pm70).